The chain runs to 425 residues: Serine--tRNA ligase (425 aa).

Residue 230-232 coordinates L-serine; that stretch reads TAE. Position 261–263 (261–263) interacts with ATP; that stretch reads RSE. Glu-284 contributes to the L-serine binding site. 348–351 is an ATP binding site; sequence EISS. Ser-384 lines the L-serine pocket.

Belongs to the class-II aminoacyl-tRNA synthetase family. Type-1 seryl-tRNA synthetase subfamily. In terms of assembly, homodimer. The tRNA molecule binds across the dimer.

It localises to the cytoplasm. It catalyses the reaction tRNA(Ser) + L-serine + ATP = L-seryl-tRNA(Ser) + AMP + diphosphate + H(+). The enzyme catalyses tRNA(Sec) + L-serine + ATP = L-seryl-tRNA(Sec) + AMP + diphosphate + H(+). The protein operates within aminoacyl-tRNA biosynthesis; selenocysteinyl-tRNA(Sec) biosynthesis; L-seryl-tRNA(Sec) from L-serine and tRNA(Sec): step 1/1. Catalyzes the attachment of serine to tRNA(Ser). Is also able to aminoacylate tRNA(Sec) with serine, to form the misacylated tRNA L-seryl-tRNA(Sec), which will be further converted into selenocysteinyl-tRNA(Sec). This is Serine--tRNA ligase from Streptococcus pyogenes serotype M3 (strain SSI-1).